The sequence spans 426 residues: Stationary phase-inducible protein CsiE (426 aa).

2 consecutive PRD domains span residues 120–225 and 229–336; these read ARNF…DPLR and QRDR…ENDL.

In Escherichia coli (strain K12), this protein is Stationary phase-inducible protein CsiE (csiE).